A 396-amino-acid chain; its full sequence is Cytochrome b (396 aa).

The next 4 membrane-spanning stretches (helical) occupy residues 37–57 (FGSL…ILAM), 81–102 (WLMR…YAHI), 117–137 (WNVG…GYVL), and 182–202 (FFTF…IHIM). Residues histidine 87 and histidine 101 each contribute to the heme b site. Residues histidine 186 and histidine 200 each coordinate heme b. Histidine 205 contributes to the a ubiquinone binding site. Helical transmembrane passes span 230 to 250 (FKDI…SLLA), 292 to 312 (LGGV…PFTH), 324 to 344 (LAQI…WLGG), and 351 to 371 (FILM…LVFP).

This sequence belongs to the cytochrome b family. In terms of assembly, the cytochrome bc1 complex contains 3 respiratory subunits (MT-CYB, CYC1 and UQCRFS1), 2 core proteins (UQCRC1 and UQCRC2) and probably 6 low-molecular weight proteins. Heme b serves as cofactor.

Its subcellular location is the mitochondrion inner membrane. In terms of biological role, component of the ubiquinol-cytochrome c reductase complex (complex III or cytochrome b-c1 complex) that is part of the mitochondrial respiratory chain. The b-c1 complex mediates electron transfer from ubiquinol to cytochrome c. Contributes to the generation of a proton gradient across the mitochondrial membrane that is then used for ATP synthesis. In Petromyzon marinus (Sea lamprey), this protein is Cytochrome b (mt-cyb).